The primary structure comprises 94 residues: Large ribosomal subunit protein eL14 (94 aa).

It belongs to the eukaryotic ribosomal protein eL14 family.

The sequence is that of Large ribosomal subunit protein eL14 from Methanopyrus kandleri (strain AV19 / DSM 6324 / JCM 9639 / NBRC 100938).